Here is a 155-residue protein sequence, read N- to C-terminus: MIDRFLDKRNPREWLCLKRTVRFGETDAAGVVHFLELFRWCHETWEESLEKYGIALKDIFPTNEINTSQLDIALPVVHCEANYFQPLYVGDTINIELETEKINESSFVLRFKFKKNGEQIGSTNIKHVSINPITRKKCALSKQINLWLHESSSNF.

Asp27 is a catalytic residue.

Belongs to the 4-hydroxybenzoyl-CoA thioesterase family. DHNA-CoA hydrolase subfamily.

The catalysed reaction is 1,4-dihydroxy-2-naphthoyl-CoA + H2O = 1,4-dihydroxy-2-naphthoate + CoA + H(+). Its pathway is cofactor biosynthesis; phylloquinone biosynthesis. It functions in the pathway quinol/quinone metabolism; 1,4-dihydroxy-2-naphthoate biosynthesis; 1,4-dihydroxy-2-naphthoate from chorismate: step 7/7. Its function is as follows. Catalyzes the hydrolysis of 1,4-dihydroxy-2-naphthoyl-CoA (DHNA-CoA) to 1,4-dihydroxy-2-naphthoate (DHNA), a reaction involved in phylloquinone (vitamin K1) biosynthesis. This is 1,4-dihydroxy-2-naphthoyl-CoA hydrolase from Prochlorococcus marinus (strain NATL2A).